The chain runs to 439 residues: 3-phosphoshikimate 1-carboxyvinyltransferase (439 aa).

Positions 27, 28, and 32 each coordinate 3-phosphoshikimate. Lys-27 is a phosphoenolpyruvate binding site. Phosphoenolpyruvate is bound by residues Gly-101 and Arg-130. Ser-175, Gln-177, Asp-326, and Lys-353 together coordinate 3-phosphoshikimate. Gln-177 contributes to the phosphoenolpyruvate binding site. Asp-326 acts as the Proton acceptor in catalysis. 2 residues coordinate phosphoenolpyruvate: Arg-357 and Arg-399.

The protein belongs to the EPSP synthase family. In terms of assembly, monomer.

The protein localises to the cytoplasm. It catalyses the reaction 3-phosphoshikimate + phosphoenolpyruvate = 5-O-(1-carboxyvinyl)-3-phosphoshikimate + phosphate. The protein operates within metabolic intermediate biosynthesis; chorismate biosynthesis; chorismate from D-erythrose 4-phosphate and phosphoenolpyruvate: step 6/7. Functionally, catalyzes the transfer of the enolpyruvyl moiety of phosphoenolpyruvate (PEP) to the 5-hydroxyl of shikimate-3-phosphate (S3P) to produce enolpyruvyl shikimate-3-phosphate and inorganic phosphate. The sequence is that of 3-phosphoshikimate 1-carboxyvinyltransferase from Synechococcus sp. (strain WH7803).